We begin with the raw amino-acid sequence, 662 residues long: p-hydroxybenzoic acid efflux pump subunit AaeB (662 aa).

Helical transmembrane passes span 22-42 (FAFK…HLQL), 52-72 (AAIV…SGAI), 76-96 (GMLR…IIIA), 102-122 (VVML…SSLV), 129-149 (IFGL…GTPL), 161-181 (EIVL…PRSI), 378-398 (LFWL…IAVV), 415-435 (FLFG…FIMP), 439-459 (QSML…GLEV), 465-485 (GSLG…PMTF), and 491-511 (LDSA…IMLI).

The protein belongs to the aromatic acid exporter ArAE (TC 2.A.85) family.

It is found in the cell inner membrane. Forms an efflux pump with AaeA. Could function as a metabolic relief valve, allowing to eliminate certain compounds when they accumulate to high levels in the cell. In Pectobacterium atrosepticum (strain SCRI 1043 / ATCC BAA-672) (Erwinia carotovora subsp. atroseptica), this protein is p-hydroxybenzoic acid efflux pump subunit AaeB.